Consider the following 556-residue polypeptide: ATP synthase subunit beta-2, mitochondrial (556 aa).

Residues M1 to A20 are compositionally biased toward low complexity. The segment at M1–H37 is disordered. The transit peptide at M1 to Y51 directs the protein to the mitochondrion. The residue at position 59 (S59) is a Phosphoserine. Position 231 to 238 (G231 to T238) interacts with ATP.

It belongs to the ATPase alpha/beta chains family. In terms of assembly, F-type ATPases have 2 components, CF(1) - the catalytic core - and CF(0) - the membrane proton channel. CF(1) has five subunits: alpha(3), beta(3), gamma(1), delta(1), epsilon(1). CF(0) has three main subunits: a, b and c.

The protein localises to the mitochondrion. It is found in the mitochondrion inner membrane. It carries out the reaction ATP + H2O + 4 H(+)(in) = ADP + phosphate + 5 H(+)(out). Mitochondrial membrane ATP synthase (F(1)F(0) ATP synthase or Complex V) produces ATP from ADP in the presence of a proton gradient across the membrane which is generated by electron transport complexes of the respiratory chain. F-type ATPases consist of two structural domains, F(1) - containing the extramembraneous catalytic core, and F(0) - containing the membrane proton channel, linked together by a central stalk and a peripheral stalk. During catalysis, ATP synthesis in the catalytic domain of F(1) is coupled via a rotary mechanism of the central stalk subunits to proton translocation. Subunits alpha and beta form the catalytic core in F(1). Rotation of the central stalk against the surrounding alpha(3)beta(3) subunits leads to hydrolysis of ATP in three separate catalytic sites on the beta subunits. This chain is ATP synthase subunit beta-2, mitochondrial, found in Arabidopsis thaliana (Mouse-ear cress).